Consider the following 227-residue polypeptide: tRNA (guanine-N(1)-)-methyltransferase (227 aa).

S-adenosyl-L-methionine contacts are provided by residues Gly110 and Ile129 to Leu134.

Belongs to the RNA methyltransferase TrmD family. In terms of assembly, homodimer.

Its subcellular location is the cytoplasm. It catalyses the reaction guanosine(37) in tRNA + S-adenosyl-L-methionine = N(1)-methylguanosine(37) in tRNA + S-adenosyl-L-homocysteine + H(+). Functionally, specifically methylates guanosine-37 in various tRNAs. This is tRNA (guanine-N(1)-)-methyltransferase from Mycoplasmopsis agalactiae (strain NCTC 10123 / CIP 59.7 / PG2) (Mycoplasma agalactiae).